We begin with the raw amino-acid sequence, 342 residues long: Nucleoid-associated protein Sputcn32_2288 (342 aa).

Belongs to the YejK family.

It is found in the cytoplasm. Its subcellular location is the nucleoid. The chain is Nucleoid-associated protein Sputcn32_2288 from Shewanella putrefaciens (strain CN-32 / ATCC BAA-453).